The chain runs to 691 residues: DNA ligase (691 aa).

NAD(+) contacts are provided by residues Asp53–Asp57, Ser102–Leu103, and Glu135. Lys137 serves as the catalytic N6-AMP-lysine intermediate. The NAD(+) site is built by Arg158, Glu195, Lys310, and Lys334. The Zn(2+) site is built by Cys428, Cys431, Cys446, and Cys452. A BRCT domain is found at Ser613 to Glu691.

The protein belongs to the NAD-dependent DNA ligase family. LigA subfamily. Mg(2+) is required as a cofactor. Mn(2+) serves as cofactor.

It carries out the reaction NAD(+) + (deoxyribonucleotide)n-3'-hydroxyl + 5'-phospho-(deoxyribonucleotide)m = (deoxyribonucleotide)n+m + AMP + beta-nicotinamide D-nucleotide.. Its function is as follows. DNA ligase that catalyzes the formation of phosphodiester linkages between 5'-phosphoryl and 3'-hydroxyl groups in double-stranded DNA using NAD as a coenzyme and as the energy source for the reaction. It is essential for DNA replication and repair of damaged DNA. The protein is DNA ligase of Psychrobacter cryohalolentis (strain ATCC BAA-1226 / DSM 17306 / VKM B-2378 / K5).